The chain runs to 357 residues: Protein RecA (357 aa).

67–74 (GPESSGKT) lines the ATP pocket.

This sequence belongs to the RecA family.

The protein resides in the cytoplasm. Can catalyze the hydrolysis of ATP in the presence of single-stranded DNA, the ATP-dependent uptake of single-stranded DNA by duplex DNA, and the ATP-dependent hybridization of homologous single-stranded DNAs. It interacts with LexA causing its activation and leading to its autocatalytic cleavage. This Shewanella oneidensis (strain ATCC 700550 / JCM 31522 / CIP 106686 / LMG 19005 / NCIMB 14063 / MR-1) protein is Protein RecA.